Consider the following 135-residue polypeptide: Salivary protein 15 Iper-1 (135 aa).

Positions 1-22 are cleaved as a signal peptide; sequence MESFVAMKVVCILFLFVVAAEA. Residues Asn-93 and Asn-104 are each glycosylated (N-linked (GlcNAc...) asparagine). Residues 116-135 are CD4-binding; sequence GPNKQTCADKSKCVGHIPGC.

It belongs to the salp15 family. As to quaternary structure, interacts with host CD4. Interacts with host DC-SIGN (CD209). (Microbial infection) Interacts with Borrelia outer surface protein C (OspC). As to expression, expressed in salivary glands from feeding female ticks. Highly expressed 4 days after start of feeding.

The protein resides in the secreted. In terms of biological role, salivary tick protein that downregulates host immune system by binding to both dendritic cells, and CD4(+) T cells. Specifically binds to the CD4 coreceptor on T cells. This interaction prevents the activation of the Src kinase, Lck, and its downstream substrate Zap-70, and results in deficient activation of PLCgamma1, the repression of calcium fluxes triggered by T-cell antigen receptor (TCR) ligation, and a subsequent reduction in interleukin-2 production. This salivary protein also binds to DC-SIGN (CD209) on dendritic cells (DC) and activates the Raf-1 kinase/MEK signaling pathway that results in down-regulating expression of pro-inflammatory cytokines. Furthermore, it inhibits T cell proliferation induced by DCs. It also inhibits in vitro keratinocyte inflammation induced by Borrelia burgdorferi or by the major outer surface protein (OspC) of Borrelia. In addition, it downregulates chemokines and monocyte chemoattractant protein 1, as well as several antimicrobial peptides such as defensins, cathelicidin, psoriasin, and RNase 7. Apart from its immunomodulatory activities, it is also associated with protection of Borrelia spirochetes from antibody-mediated killing through its binding to OspC. In vivo, tests on different immune disease animal models show promising therapeutic results, e.g., in inhibiting HIV infection, experimental autoimmune encephalomyelitis, transplantation rejection, and asthma. (Microbial infection) Protects Borrelia garinii from anti-Borrelia antibody-mediated cytotoxicity in vitro. May facilitate B.garinii transmission in mouse model. Functionally, (Microbial infection) Protects Borrelia burgdorferi from anti-Borrelia antibody-mediated cytotoxicity in vitro. Its function is as follows. (Microbial infection) Protects Borrelia afzelii from anti-Borrelia antibody-mediated cytotoxicity in vitro. This is Salivary protein 15 Iper-1 from Ixodes persulcatus (Taiga tick).